We begin with the raw amino-acid sequence, 191 residues long: Cell number regulator 1 (191 aa).

Positions 13-44 (FSAGAPPTAPPPPAAYHQQQQQHGANMDTSRP) are disordered. Residues 27–37 (AYHQQQQQHGA) show a composition bias toward low complexity. A helical transmembrane segment spans residues 91–113 (IASGLVYGLICASTGMGCLYSCL).

It belongs to the cornifelin family. In terms of tissue distribution, expressed in roots, coleoptiles, stalks and silks. Detected in leaves, apical meristems, immature ears and pericarps. Highest expression in coleoptiles and silks.

It localises to the membrane. Functionally, acts as a negative regulator of cell number. The chain is Cell number regulator 1 (CNR1) from Zea mays (Maize).